Reading from the N-terminus, the 314-residue chain is Methylglutaconyl-CoA hydratase, mitochondrial (314 aa).

A mitochondrion-targeting transit peptide spans 1–42; sequence MAAAAPGALGALRTGRVRLVAACCARLGPAAWARGTAPRRGY. N6-acetyllysine; alternate is present on Lys75. At Lys75 the chain carries N6-succinyllysine; alternate. An RNA-binding region spans residues 80 to 94; it reads KNLLKMLSKAVDALK. Lys84 carries the N6-succinyllysine modification. An N6-acetyllysine; alternate mark is found at Lys88 and Lys119. N6-succinyllysine; alternate occurs at positions 88 and 119. 2 positions are modified to N6-succinyllysine: Lys123 and Lys135. N6-acetyllysine; alternate is present on residues Lys179 and Lys186. Residues Lys179 and Lys186 each carry the N6-succinyllysine; alternate modification. An N6-succinyllysine modification is found at Lys304.

This sequence belongs to the enoyl-CoA hydratase/isomerase family. As to quaternary structure, homohexamer. In terms of tissue distribution, detected in heart, brain, liver, spleen, skeletal muscle and kidney. Expressed in brain, kidney, liver and spleen tissue (at protein level).

The protein localises to the mitochondrion. The catalysed reaction is (3S)-3-hydroxy-3-methylglutaryl-CoA = 3-methyl-(2E)-glutaconyl-CoA + H2O. The enzyme catalyses (3S)-citramalyl-CoA = itaconyl-CoA + H2O. It carries out the reaction 3-hydroxyisovaleryl-CoA = 3-methylbut-2-enoyl-CoA + H2O. It catalyses the reaction (S)-3-hydroxyglutaryl-CoA = (2E)-glutaconyl-CoA + H2O. It participates in amino-acid degradation; L-leucine degradation; (S)-3-hydroxy-3-methylglutaryl-CoA from 3-isovaleryl-CoA: step 3/3. Its function is as follows. Catalyzes the fifth step in the leucine degradation pathway, the reversible hydration of 3-methylglutaconyl-CoA (3-MG-CoA) to 3-hydroxy-3-methylglutaryl-CoA (HMG-CoA). Can catalyze the reverse reaction but at a much lower rate in vitro. HMG-CoA is then quickly degraded by another enzyme (such as HMG-CoA lyase) to give acetyl-CoA and acetoacetate. Uses other substrates such as (2E)-glutaconyl-CoA efficiently in vitro, and to a lesser extent 3-methylcrotonyl-CoA (3-methyl-(2E)-butenoyl-CoA), crotonyl-CoA ((2E)-butenoyl-CoA) and 3-hydroxybutanoyl-CoA (the missing carboxylate reduces affinity to the active site). Originally it was identified as an RNA-binding protein as it binds to AU-rich elements (AREs) in vitro. AREs direct rapid RNA degradation and mRNA deadenylation. Might have itaconyl-CoA hydratase activity, converting itaconyl-CoA into citramalyl-CoA in the C5-dicarboxylate catabolism pathway. The C5-dicarboxylate catabolism pathway is required to detoxify itaconate, an antimicrobial metabolite and immunomodulator produced by macrophages during certain infections, that can act as a vitamin B12-poisoning metabolite. This chain is Methylglutaconyl-CoA hydratase, mitochondrial (Auh), found in Mus musculus (Mouse).